The following is a 72-amino-acid chain: Translation initiation factor IF-1 (72 aa).

The region spanning M1 to K72 is the S1-like domain.

The protein belongs to the IF-1 family. As to quaternary structure, component of the 30S ribosomal translation pre-initiation complex which assembles on the 30S ribosome in the order IF-2 and IF-3, IF-1 and N-formylmethionyl-tRNA(fMet); mRNA recruitment can occur at any time during PIC assembly.

The protein resides in the cytoplasm. One of the essential components for the initiation of protein synthesis. Stabilizes the binding of IF-2 and IF-3 on the 30S subunit to which N-formylmethionyl-tRNA(fMet) subsequently binds. Helps modulate mRNA selection, yielding the 30S pre-initiation complex (PIC). Upon addition of the 50S ribosomal subunit IF-1, IF-2 and IF-3 are released leaving the mature 70S translation initiation complex. The polypeptide is Translation initiation factor IF-1 (Xanthomonas campestris pv. campestris (strain B100)).